The primary structure comprises 77 residues: Large ribosomal subunit protein uL29 (77 aa).

It belongs to the universal ribosomal protein uL29 family.

In Mycolicibacterium smegmatis (strain ATCC 700084 / mc(2)155) (Mycobacterium smegmatis), this protein is Large ribosomal subunit protein uL29.